Reading from the N-terminus, the 546-residue chain is Probable bifunctional SAT/APS kinase (546 aa).

Residues M1 to K370 form a sulfate adenylyltransferase region. The segment at Q371 to D546 is adenylsulfate kinase. G379–S386 provides a ligand contact to ATP. The active-site Phosphoserine intermediate is the S453.

This sequence in the N-terminal section; belongs to the sulfate adenylyltransferase family. In the C-terminal section; belongs to the APS kinase family.

It catalyses the reaction sulfate + ATP + H(+) = adenosine 5'-phosphosulfate + diphosphate. It carries out the reaction adenosine 5'-phosphosulfate + ATP = 3'-phosphoadenylyl sulfate + ADP + H(+). It functions in the pathway sulfur metabolism; hydrogen sulfide biosynthesis; sulfite from sulfate: step 1/3. It participates in sulfur metabolism; hydrogen sulfide biosynthesis; sulfite from sulfate: step 2/3. The protein is Probable bifunctional SAT/APS kinase (sat/cysC) of Aquifex aeolicus (strain VF5).